A 205-amino-acid polypeptide reads, in one-letter code: Histone H1, early embryonic (205 aa).

Disordered regions lie at residues 1 to 21 (MAEKNSSKKVTTKKPAAHPPA) and 94 to 205 (AKAQ…AKSK). The H15 domain occupies 17–91 (AHPPAAEMVA…GASGSFKVNV (75 aa)). Residues 98–124 (ASEKAKKEKEKAKLLAQREKAKEKGCS) show a composition bias toward basic and acidic residues. Composition is skewed to basic residues over residues 135–150 (PKKVKAAPKKAKKPVK) and 157–205 (EKKK…AKSK).

This sequence belongs to the histone H1/H5 family.

The protein resides in the nucleus. It is found in the chromosome. Functionally, histones H1 are necessary for the condensation of nucleosome chains into higher-order structures. The sequence is that of Histone H1, early embryonic from Strongylocentrotus purpuratus (Purple sea urchin).